The following is a 668-amino-acid chain: UvrABC system protein B (668 aa).

The Helicase ATP-binding domain occupies 36-423; that stretch reads DNIKGGEKAQ…TETVVEQIIR (388 aa). 49–56 is a binding site for ATP; sequence GATGTGKT. The Beta-hairpin signature appears at 102–125; the sequence is YYDYYQPEAYVPSSDTYIEKDSSI. One can recognise a Helicase C-terminal domain in the interval 440–606; sequence QMDDLLGEIN…TIKKEIRDLI (167 aa). In terms of domain architecture, UVR spans 632–667; that stretch reads QEAIKKLQKQMHEAAELLDFELAAQIRDMVLELKSM.

The protein belongs to the UvrB family. In terms of assembly, forms a heterotetramer with UvrA during the search for lesions. Interacts with UvrC in an incision complex.

The protein resides in the cytoplasm. The UvrABC repair system catalyzes the recognition and processing of DNA lesions. A damage recognition complex composed of 2 UvrA and 2 UvrB subunits scans DNA for abnormalities. Upon binding of the UvrA(2)B(2) complex to a putative damaged site, the DNA wraps around one UvrB monomer. DNA wrap is dependent on ATP binding by UvrB and probably causes local melting of the DNA helix, facilitating insertion of UvrB beta-hairpin between the DNA strands. Then UvrB probes one DNA strand for the presence of a lesion. If a lesion is found the UvrA subunits dissociate and the UvrB-DNA preincision complex is formed. This complex is subsequently bound by UvrC and the second UvrB is released. If no lesion is found, the DNA wraps around the other UvrB subunit that will check the other stand for damage. This chain is UvrABC system protein B, found in Streptococcus thermophilus (strain CNRZ 1066).